Reading from the N-terminus, the 260-residue chain is Acetylglutamate kinase (260 aa).

Residues 41–42 (GG), Arg63, and Asn156 contribute to the substrate site.

This sequence belongs to the acetylglutamate kinase family. ArgB subfamily.

The protein resides in the cytoplasm. It carries out the reaction N-acetyl-L-glutamate + ATP = N-acetyl-L-glutamyl 5-phosphate + ADP. The protein operates within amino-acid biosynthesis; L-arginine biosynthesis; N(2)-acetyl-L-ornithine from L-glutamate: step 2/4. In terms of biological role, catalyzes the ATP-dependent phosphorylation of N-acetyl-L-glutamate. The chain is Acetylglutamate kinase from Halalkalibacterium halodurans (strain ATCC BAA-125 / DSM 18197 / FERM 7344 / JCM 9153 / C-125) (Bacillus halodurans).